The primary structure comprises 198 residues: Probable minor pilin MMP0709 (198 aa).

The propeptide occupies 1–5 (MSNRG). Positions 6–14 (QLSIEMVIL) match the QXSXEXXXL motif.

In terms of processing, the N-terminus is probably cleaved by the prepilin peptidase EppA, which recognizes the class III signal sequence.

Its subcellular location is the secreted. It is found in the cell surface. It localises to the fimbrium. This is Probable minor pilin MMP0709 from Methanococcus maripaludis (strain DSM 14266 / JCM 13030 / NBRC 101832 / S2 / LL).